We begin with the raw amino-acid sequence, 175 residues long: UPF0398 protein SPP_0409 (175 aa).

This sequence belongs to the UPF0398 family.

This is UPF0398 protein SPP_0409 from Streptococcus pneumoniae (strain P1031).